We begin with the raw amino-acid sequence, 438 residues long: MSAVKKALDLMKAEEVEYVDIRFCDPRGKLQHVTLIADLVDEDFFEEGFMFDGSSIAGWKSIDQSDMKLIPDASSVYIDPFYAEKTMCVHCNVVEPDTAEAYSRDPRIALKAEAYLKASGIGDVAYFGPEAEFFIFDDVRYSVTPAKVAYQIDAEAAAWNTDAEVEMGNLAHRAGHKGGYFPVNPVDEAQDLRGEMLSTMKRMGMKVDKHHHEVATCQHELGLIFGGLTEQADNILKYKYVIHNVAHAYGKTVTFMPKPMKGDNGSGMHVNMSIWKDGKPLFAGDKYADLSQEALYFIGGILKHAKALNALTNPGTNSYKRLIPGFEAPVLRAYSARNRSGCVRIPWTESPKAKRVEARFPDPSANPYLAFAALLMAGLDGIKNKIDPGPASDKDLYDLPPEELAAIPTVCGSLREALTELEKDHDFLLAGDVFTKDQ.

A GS beta-grasp domain is found at 14-98 (EEVEYVDIRF…VHCNVVEPDT (85 aa)). Residues 106–438 (PRIALKAEAY…LAGDVFTKDQ (333 aa)) form the GS catalytic domain. 2 residues coordinate Mg(2+): glutamate 130 and glutamate 132. Position 208 (aspartate 208) interacts with ATP. 2 residues coordinate Mg(2+): glutamate 213 and glutamate 220. L-glutamate is bound by residues 264–265 (NG) and glycine 265. Histidine 269 provides a ligand contact to Mg(2+). Residues 271-273 (NMS) and serine 273 contribute to the ATP site. Residues arginine 321, glutamate 327, and arginine 339 each contribute to the L-glutamate site. ATP-binding residues include arginine 339, arginine 344, and lysine 352. Glutamate 357 serves as a coordination point for Mg(2+). Arginine 359 serves as a coordination point for L-glutamate. Tyrosine 397 bears the O-AMP-tyrosine mark.

The protein belongs to the glutamine synthetase family. In terms of assembly, oligomer of 12 subunits arranged in the form of two hexameric ring. The cofactor is Mg(2+).

The protein resides in the cytoplasm. It carries out the reaction L-glutamate + NH4(+) + ATP = L-glutamine + ADP + phosphate + H(+). Its activity is regulated as follows. The activity of this enzyme could be controlled by adenylation under conditions of abundant glutamine. Functionally, catalyzes the ATP-dependent biosynthesis of glutamine from glutamate and ammonia. The chain is Glutamine synthetase from Rhodobacter capsulatus (Rhodopseudomonas capsulata).